Reading from the N-terminus, the 265-residue chain is Undecaprenyl-diphosphatase (265 aa).

7 helical membrane-spanning segments follow: residues 38 to 58 (SDMF…IIYW), 80 to 100 (LIVA…LGFE), 107 to 127 (PIAW…WAAA), 135 to 155 (ITWL…VFPG), 175 to 195 (AAAT…ASGY), 213 to 233 (ALAI…KWLL), and 244 to 264 (FAIY…TGMI).

This sequence belongs to the UppP family.

Its subcellular location is the cell inner membrane. It catalyses the reaction di-trans,octa-cis-undecaprenyl diphosphate + H2O = di-trans,octa-cis-undecaprenyl phosphate + phosphate + H(+). In terms of biological role, catalyzes the dephosphorylation of undecaprenyl diphosphate (UPP). Confers resistance to bacitracin. The sequence is that of Undecaprenyl-diphosphatase from Rhizobium etli (strain ATCC 51251 / DSM 11541 / JCM 21823 / NBRC 15573 / CFN 42).